Reading from the N-terminus, the 103-residue chain is Defensin-like protein 289 (103 aa).

The N-terminal stretch at 1 to 29 (MATLKTTIFIIFILYISCTMFVNIFRVQA) is a signal peptide. 6 cysteine pairs are disulfide-bonded: Cys33-Cys50, Cys39-Cys55, Cys43-Cys57, Cys72-Cys92, Cys78-Cys98, and Cys84-Cys100.

It belongs to the DEFL family.

It is found in the secreted. In Arabidopsis thaliana (Mouse-ear cress), this protein is Defensin-like protein 289.